A 301-amino-acid chain; its full sequence is Runt-related transcription factor rnt-1 (301 aa).

Residues 10–138 (NFIEQQPAPA…TVDGPRDARI (129 aa)) enclose the Runt domain. Interaction with DNA stretches follow at residues 40–44 (RSNKS), 95–103 (RFVGRSGRG), and 128–137 (VTVDGPRDAR). R99 and V130 together coordinate chloride. Residues 237-301 (PSIFITPTSD…SSSPTIWRPF (65 aa)) form a disordered region. S255 carries the post-translational modification Phosphoserine. The segment covering 255–276 (SPRSITKSSETSINLIQETPES) has biased composition (polar residues). Positions 285–301 (VSITSSNSSSPTIWRPF) are enriched in low complexity.

Interacts with CBFbeta homolog bro-1; acts to increase the affinity and specificity of interaction of rnt-1 with DNA. Interacts with TGF-beta pathway protein sma-4. In terms of processing, may be ubiquitinated in order to be targeted for proteasome-mediated degradation in intestinal cells. May be phosphorylated by members of the p38 MAP kinase pathway. As to expression, expressed in the intestine.

Its subcellular location is the nucleus. Its function is as follows. Transcription factor. Binds to regulatory DNA sequences in order to modulate transcription; negatively autoregulates its own expression, perhaps dependent upon CBF beta homolog bro-1. Promotes proliferation, and prevents differentiation, of seam cells, a stem cell-like lineage, acting in concert with bro-1. Required for controlling cell proliferation in the seam cells, perhaps by repressing expression of cyclin-dependent kinase inhibitor cki-1. Inhibition of seam cell differentiation is regulated by rnt-1 and bro-1, perhaps acting upstream of pop-1, by antagonizing pop-1 repressor function. Required for asymmetrical cell divisions in the lineage derived from a posterior embryonic seam cell, the T blast cell, and for asymmetric expression of zinc finger protein tlp-1. Regulates growth and male tail development. Involved in the oxidative stress response, perhaps downstream of the p38 MAP kinase pathway, and acting as part of a negative feedback loop via a transcriptional target gene, tyrosine-protein phosphatase vhp-1. Positively modulates dopaminergic signaling in a non-cell autonomous manner. May be involved in TGF-beta signaling. The sequence is that of Runt-related transcription factor rnt-1 from Caenorhabditis elegans.